Reading from the N-terminus, the 214-residue chain is Outer-membrane lipoprotein LolB (214 aa).

The N-terminal stretch at 1-25 is a signal peptide; that stretch reads MNNLKRFTKSIFSCIALSGLLFLGG. C26 is lipidated: N-palmitoyl cysteine. C26 is lipidated: S-diacylglycerol cysteine.

Belongs to the LolB family. In terms of assembly, monomer.

It is found in the cell outer membrane. In terms of biological role, plays a critical role in the incorporation of lipoproteins in the outer membrane after they are released by the LolA protein. The chain is Outer-membrane lipoprotein LolB from Shewanella sp. (strain MR-7).